The chain runs to 454 residues: Growth/differentiation factor 6 (454 aa).

The first 22 residues, 1–22, serve as a signal peptide directing secretion; it reads MDTPRVLLWAIFLISFLWDLPG. Residues 23 to 334 constitute a propeptide that is removed on maturation; the sequence is FQQASISSSS…LPSPGRRRRR (312 aa). The disordered stretch occupies residues 28 to 93; sequence ISSSSSSSTE…QGQEPPGRGL (66 aa). Composition is skewed to basic and acidic residues over residues 39 to 52 and 60 to 73; these read DSTK…EGKM and AEGR…LRQK. Positions 81-92 are enriched in low complexity; it reads GQHQGQEPPGRG. Asn-117 carries N-linked (GlcNAc...) asparagine glycosylation. Disordered regions lie at residues 247–268 and 303–350; these read DTGA…SLGF and AEAA…KKSR. The span at 303-319 shows a compositional bias: low complexity; the sequence is AEAAGAEGSWPAPSGSP. Residues 329–350 show a composition bias toward basic residues; it reads GRRRRRTAFASRHGKRHGKKSR. 3 disulfides stabilise this stretch: Cys-353–Cys-419, Cys-382–Cys-451, and Cys-386–Cys-453.

This sequence belongs to the TGF-beta family. In terms of assembly, homodimer; disulfide-linked. As to expression, expressed in different subsets of developing joints. Highly expressed in the cochlea.

It localises to the secreted. Functionally, growth factor that controls proliferation and cellular differentiation in the retina and bone formation. Plays a key role in regulating apoptosis during retinal development. Establishes dorsal-ventral positional information in the retina and controls the formation of the retinotectal map. Required for normal formation of bones and joints in the limbs, skull, digits and axial skeleton. Plays a key role in establishing boundaries between skeletal elements during development. Regulation of GDF6 expression seems to be a mechanism for evolving species-specific changes in skeletal structures. Seems to positively regulate differentiation of chondrogenic tissue through the growth factor receptors subunits BMPR1A, BMPR1B, BMPR2 and ACVR2A, leading to the activation of SMAD1-SMAD5-SMAD8 complex. The regulation of chondrogenic differentiation is inhibited by NOG. Also involved in the induction of adipogenesis from mesenchymal stem cells. This mechanism acts through the growth factor receptors subunits BMPR1A, BMPR2 and ACVR2A and the activation of SMAD1-SMAD5-SMAD8 complex and MAPK14/p38. The chain is Growth/differentiation factor 6 (Gdf6) from Mus musculus (Mouse).